Consider the following 500-residue polypeptide: MSGSMAQAFAHNFLGQSPRWYKASIVAFLLLNPPLFFAVSPAAAGWCLVIEFIFTLAMALKCYPLMPGGLLLVQALVLGMTTPQALYDELVHNFPVILLLMFMVAGIYFMKELLLYLFSRLLLGVRSKALLGLLFCFLSAFLSAFLDALTVTAVIISAAVGFYSVYHRVASGNDPRQDSAFADDQQLPALHHDDLEQFRAFLRSLLMHGAVGTALGGVCTLVGEPQNLLIGHEMGWHFADFFSKVAPVSMPVLAAGLVTCVLLEKLRWFGYGTLLPDNVRQVLANYAAEDDAQRTSRQRAALLVQGLAALILIVALALHVAEVGLIGLLVIVLITAFTGITDEHRLGNAFKDAMPFTALLVVFFAVVAVIHQQQLFTPLIQWVLALPADQQPGMLFIANGLLSAISDNVFVATIYITEVKQAFISGQMSREHFETLAIAINTGTNLPSVATPNGQAAFLFLLTSAIAPLVRLSYGRMVWMALPYTVVMGLLGWYAVSYWL.

12 helical membrane passes run 34-54, 62-82, 90-110, 129-149, 150-170, 205-225, 241-261, 311-331, 350-370, 394-414, 449-469, and 477-497; these read PLFFAVSPAAAGWCLVIEFIF, CYPLMPGGLLLVQALVLGMTT, LVHNFPVILLLMFMVAGIYFM, ALLGLLFCFLSAFLSAFLDAL, TVTAVIISAAVGFYSVYHRVA, LLMHGAVGTALGGVCTLVGEP, FFSKVAPVSMPVLAAGLVTCV, ILIVALALHVAEVGLIGLLVI, FKDAMPFTALLVVFFAVVAVI, MLFIANGLLSAISDNVFVATI, VATPNGQAAFLFLLTSAIAPL, and MVWMALPYTVVMGLLGWYAVS.

The protein belongs to the NhaB Na(+)/H(+) (TC 2.A.34) antiporter family.

It is found in the cell inner membrane. The enzyme catalyses 2 Na(+)(in) + 3 H(+)(out) = 2 Na(+)(out) + 3 H(+)(in). In terms of biological role, na(+)/H(+) antiporter that extrudes sodium in exchange for external protons. The polypeptide is Na(+)/H(+) antiporter NhaB (Pseudomonas fluorescens (strain ATCC BAA-477 / NRRL B-23932 / Pf-5)).